The following is a 423-amino-acid chain: Kynureninase (423 aa).

Residues L105, S106, 133-136, D218, H221, and Y243 each bind pyridoxal 5'-phosphate; that span reads FPSD. K244 is subject to N6-(pyridoxal phosphate)lysine. Residues W273 and N301 each coordinate pyridoxal 5'-phosphate.

This sequence belongs to the kynureninase family. In terms of assembly, homodimer. Pyridoxal 5'-phosphate serves as cofactor.

It carries out the reaction L-kynurenine + H2O = anthranilate + L-alanine + H(+). The enzyme catalyses 3-hydroxy-L-kynurenine + H2O = 3-hydroxyanthranilate + L-alanine + H(+). Its pathway is amino-acid degradation; L-kynurenine degradation; L-alanine and anthranilate from L-kynurenine: step 1/1. The protein operates within cofactor biosynthesis; NAD(+) biosynthesis; quinolinate from L-kynurenine: step 2/3. Its function is as follows. Catalyzes the cleavage of L-kynurenine (L-Kyn) and L-3-hydroxykynurenine (L-3OHKyn) into anthranilic acid (AA) and 3-hydroxyanthranilic acid (3-OHAA), respectively. This Xanthomonas oryzae pv. oryzae (strain MAFF 311018) protein is Kynureninase.